A 102-amino-acid chain; its full sequence is MAPRRISVSETCRPVLPRHARLKFDDTRQRWVILAPERVLAPDEIAVEILQLCDGACDVAAIIDALAAKYTADRAEIGRDVMAMLQDLADKGFLTEARETAP.

This sequence belongs to the PqqD family. Monomer. Interacts with PqqE.

The protein operates within cofactor biosynthesis; pyrroloquinoline quinone biosynthesis. Functions as a PqqA binding protein and presents PqqA to PqqE, in the pyrroloquinoline quinone (PQQ) biosynthetic pathway. This Rhodopseudomonas palustris (strain ATCC BAA-98 / CGA009) protein is PqqA binding protein.